Reading from the N-terminus, the 485-residue chain is Adenosylhomocysteinase (485 aa).

3 residues coordinate substrate: Thr-64, Asp-139, and Glu-205. Residue 206 to 208 coordinates NAD(+); it reads TTT. Residues Lys-235 and Asp-239 each coordinate substrate. NAD(+) is bound by residues Asn-240, 269 to 274, Glu-292, Asn-327, 348 to 350, and Asn-397; these read GYGDVG and IGH.

The protein belongs to the adenosylhomocysteinase family. As to quaternary structure, homotetramer. NAD(+) is required as a cofactor.

It carries out the reaction S-adenosyl-L-homocysteine + H2O = L-homocysteine + adenosine. It functions in the pathway amino-acid biosynthesis; L-homocysteine biosynthesis; L-homocysteine from S-adenosyl-L-homocysteine: step 1/1. Adenosylhomocysteine is a competitive inhibitor of S-adenosyl-L-methionine-dependent methyl transferase reactions; therefore adenosylhomocysteinase may play a key role in the control of methylations via regulation of the intracellular concentration of adenosylhomocysteine. The polypeptide is Adenosylhomocysteinase (SAHH) (Triticum aestivum (Wheat)).